The primary structure comprises 631 residues: Probable protein phosphatase 2C 31 (631 aa).

Disordered regions lie at residues 119–142 (GPLH…SDRF) and 205–231 (LSGR…PKGN). The segment covering 131-140 (ASGSASTASD) has biased composition (polar residues). One can recognise a PPM-type phosphatase domain in the interval 221–622 (DGDYRSTPKG…DDVSIIVMSF (402 aa)). Mn(2+) contacts are provided by D261 and G262. A disordered region spans residues 324-347 (GGDDDPDAERKAKRGRIERNADDD). The Mn(2+) site is built by D550 and D613.

This sequence belongs to the PP2C family. It depends on Mg(2+) as a cofactor. Mn(2+) serves as cofactor.

The catalysed reaction is O-phospho-L-seryl-[protein] + H2O = L-seryl-[protein] + phosphate. The enzyme catalyses O-phospho-L-threonyl-[protein] + H2O = L-threonyl-[protein] + phosphate. In Oryza sativa subsp. japonica (Rice), this protein is Probable protein phosphatase 2C 31.